Reading from the N-terminus, the 160-residue chain is Large ribosomal subunit protein uL16 (160 aa).

Polar residues predominate over residues 138 to 148 (KNLEVSSQENT). The segment at 138-160 (KNLEVSSQENTKNNKESQEEVKQ) is disordered. The segment covering 149–160 (KNNKESQEEVKQ) has biased composition (basic and acidic residues).

Belongs to the universal ribosomal protein uL16 family. In terms of assembly, part of the 50S ribosomal subunit.

Functionally, binds 23S rRNA and is also seen to make contacts with the A and possibly P site tRNAs. The chain is Large ribosomal subunit protein uL16 from Prochlorococcus marinus (strain MIT 9312).